The chain runs to 445 residues: UPF0210 protein SSA_2018 (445 aa).

It belongs to the UPF0210 family. In terms of assembly, homodimer.

In Streptococcus sanguinis (strain SK36), this protein is UPF0210 protein SSA_2018.